The primary structure comprises 398 residues: MSKTIAINAGSSSLKWQLYQMPEEAVLAQGIIERIGLKDSISTVKYDGKKEEQILDIHDHTEAVKILLNDLIHFGIIAAYDEITGVGHRVVAGGELFKESVVVNDKVLEQIEELSVLAPLHNPGAAAGIRAFRDILPDITSVCVFDTSFHTSMAKHTYLYPIPQKYYTDYKVRKYGAHGTSHKYVAQEAAKMLGRPLEELKLITAHIGNGVSITANYHGQSADTSMGFTPLAGPMMGTRSGDIDPAIIPYLIEQDPELKDAADVVNMLNKKSGLSGVSGISSDMRDIEAGLQEDNPDAVLAYNIFIDRIKKCIGQYFAVLNGADALVFTAGMGENAPLMRQDVIGGLTWFGMDIDPEKNVFGYRGDISTPESKVKVLVISTDEELCIARDVERLKNTK.

Residue N8 coordinates Mg(2+). ATP is bound at residue K15. Position 89 (R89) interacts with substrate. Residue D146 is the Proton donor/acceptor of the active site. Residues 206–210 (HIGNG), 283–285 (DMR), and 331–335 (GMGEN) each bind ATP. Position 383 (E383) interacts with Mg(2+).

Belongs to the acetokinase family. In terms of assembly, homodimer. The cofactor is Mg(2+). It depends on Mn(2+) as a cofactor.

Its subcellular location is the cytoplasm. The catalysed reaction is acetate + ATP = acetyl phosphate + ADP. It functions in the pathway metabolic intermediate biosynthesis; acetyl-CoA biosynthesis; acetyl-CoA from acetate: step 1/2. In terms of biological role, catalyzes the formation of acetyl phosphate from acetate and ATP. Can also catalyze the reverse reaction. The sequence is that of Acetate kinase from Streptococcus pyogenes serotype M4 (strain MGAS10750).